A 239-amino-acid chain; its full sequence is tRNA (guanine-N(7)-)-methyltransferase (239 aa).

The segment covering Met-1–Glu-13 has biased composition (polar residues). A disordered region spans residues Met-1–Leu-30. S-adenosyl-L-methionine-binding residues include Asp-72, Glu-97, Asn-124, and Asp-147. Asp-147 is an active-site residue. Residues Lys-151 and Asp-183 each coordinate substrate.

It belongs to the class I-like SAM-binding methyltransferase superfamily. TrmB family.

The catalysed reaction is guanosine(46) in tRNA + S-adenosyl-L-methionine = N(7)-methylguanosine(46) in tRNA + S-adenosyl-L-homocysteine. It participates in tRNA modification; N(7)-methylguanine-tRNA biosynthesis. In terms of biological role, catalyzes the formation of N(7)-methylguanine at position 46 (m7G46) in tRNA. This chain is tRNA (guanine-N(7)-)-methyltransferase, found in Synechococcus sp. (strain JA-2-3B'a(2-13)) (Cyanobacteria bacterium Yellowstone B-Prime).